A 114-amino-acid chain; its full sequence is RutC family protein YoaB (114 aa).

Belongs to the RutC family.

The protein is RutC family protein YoaB (yoaB) of Escherichia coli O6:H1 (strain CFT073 / ATCC 700928 / UPEC).